The chain runs to 933 residues: Protein translocase subunit SecA (933 aa).

Residues glutamine 87, 105-109 (GEGKT), and aspartate 515 each bind ATP. 4 residues coordinate Zn(2+): cysteine 917, cysteine 919, cysteine 928, and histidine 929.

Belongs to the SecA family. Monomer and homodimer. Part of the essential Sec protein translocation apparatus which comprises SecA, SecYEG and auxiliary proteins SecDF-YajC and YidC. Requires Zn(2+) as cofactor.

Its subcellular location is the cell inner membrane. The protein resides in the cytoplasm. It carries out the reaction ATP + H2O + cellular proteinSide 1 = ADP + phosphate + cellular proteinSide 2.. Its function is as follows. Part of the Sec protein translocase complex. Interacts with the SecYEG preprotein conducting channel. Has a central role in coupling the hydrolysis of ATP to the transfer of proteins into and across the cell membrane, serving both as a receptor for the preprotein-SecB complex and as an ATP-driven molecular motor driving the stepwise translocation of polypeptide chains across the membrane. This Burkholderia cenocepacia (strain ATCC BAA-245 / DSM 16553 / LMG 16656 / NCTC 13227 / J2315 / CF5610) (Burkholderia cepacia (strain J2315)) protein is Protein translocase subunit SecA.